The sequence spans 338 residues: Heat-inducible transcription repressor HrcA (338 aa).

It belongs to the HrcA family.

Its function is as follows. Negative regulator of class I heat shock genes (grpE-dnaK-dnaJ and groELS operons). Prevents heat-shock induction of these operons. This chain is Heat-inducible transcription repressor HrcA, found in Bacillus cereus (strain AH820).